Here is a 173-residue protein sequence, read N- to C-terminus: Ribosome maturation factor RimM (173 aa).

In terms of domain architecture, PRC barrel spans Asp-95 to Leu-169.

Belongs to the RimM family. As to quaternary structure, binds ribosomal protein uS19.

It localises to the cytoplasm. In terms of biological role, an accessory protein needed during the final step in the assembly of 30S ribosomal subunit, possibly for assembly of the head region. Essential for efficient processing of 16S rRNA. May be needed both before and after RbfA during the maturation of 16S rRNA. It has affinity for free ribosomal 30S subunits but not for 70S ribosomes. The protein is Ribosome maturation factor RimM of Mycobacteroides abscessus (strain ATCC 19977 / DSM 44196 / CCUG 20993 / CIP 104536 / JCM 13569 / NCTC 13031 / TMC 1543 / L948) (Mycobacterium abscessus).